We begin with the raw amino-acid sequence, 366 residues long: NADP-dependent isopropanol dehydrogenase (366 aa).

Zn(2+) is bound by residues C43, H65, E66, and D156. NADP(+) is bound by residues 181-184, 204-206, Y224, 271-273, and K346; these read IGPV, GSR, and VNY.

This sequence belongs to the zinc-containing alcohol dehydrogenase family. In terms of assembly, homodimer. The cofactor is Zn(2+).

It localises to the cytoplasm. It carries out the reaction propan-2-ol + NADP(+) = acetone + NADPH + H(+). In terms of biological role, alcohol dehydrogenase with a preference for medium chain secondary alcohols, such as 2-butanol and isopropanol. Has very low activity with primary alcohols, such as ethanol. Under physiological conditions, the enzyme reduces aldehydes and 2-ketones to produce secondary alcohols. Is also active with acetaldehyde and propionaldehyde. In Entamoeba histolytica (strain ATCC 30459 / HM-1:IMSS / ABRM), this protein is NADP-dependent isopropanol dehydrogenase.